The following is a 163-amino-acid chain: Transcription elongation factor GreA (163 aa).

The stretch at 12–73 (YEKIQKEFEA…ELSDLLARAQ (62 aa)) forms a coiled coil.

The protein belongs to the GreA/GreB family.

Necessary for efficient RNA polymerase transcription elongation past template-encoded arresting sites. The arresting sites in DNA have the property of trapping a certain fraction of elongating RNA polymerases that pass through, resulting in locked ternary complexes. Cleavage of the nascent transcript by cleavage factors such as GreA or GreB allows the resumption of elongation from the new 3'terminus. GreA releases sequences of 2 to 3 nucleotides. The chain is Transcription elongation factor GreA from Nitratiruptor sp. (strain SB155-2).